A 249-amino-acid polypeptide reads, in one-letter code: Phosphate import ATP-binding protein PstB (249 aa).

The ABC transporter domain maps to 4 to 244 (VKIKDLSLFY…PQDKRTEDYI (241 aa)). 36 to 43 (GPSGCGKS) provides a ligand contact to ATP.

This sequence belongs to the ABC transporter superfamily. Phosphate importer (TC 3.A.1.7) family. In terms of assembly, the complex is composed of two ATP-binding proteins (PstB), two transmembrane proteins (PstC and PstA) and a solute-binding protein (PstS).

Its subcellular location is the cell membrane. It catalyses the reaction phosphate(out) + ATP + H2O = ADP + 2 phosphate(in) + H(+). Part of the ABC transporter complex PstSACB involved in phosphate import. Responsible for energy coupling to the transport system. The protein is Phosphate import ATP-binding protein PstB of Clostridium tetani (strain Massachusetts / E88).